A 1221-amino-acid chain; its full sequence is DNA-directed RNA polymerase subunit beta' (1221 aa).

Zn(2+) is bound by residues C60, C62, C75, and C78. 3 residues coordinate Mg(2+): D449, D451, and D453. Zn(2+) contacts are provided by C821, C896, C903, and C906.

The protein belongs to the RNA polymerase beta' chain family. The RNAP catalytic core consists of 2 alpha, 1 beta, 1 beta' and 1 omega subunit. When a sigma factor is associated with the core the holoenzyme is formed, which can initiate transcription. Mg(2+) is required as a cofactor. Zn(2+) serves as cofactor.

The catalysed reaction is RNA(n) + a ribonucleoside 5'-triphosphate = RNA(n+1) + diphosphate. Functionally, DNA-dependent RNA polymerase catalyzes the transcription of DNA into RNA using the four ribonucleoside triphosphates as substrates. This Lactobacillus delbrueckii subsp. bulgaricus (strain ATCC BAA-365 / Lb-18) protein is DNA-directed RNA polymerase subunit beta'.